The primary structure comprises 512 residues: Centrosomal protein CCDC61 (512 aa).

N-acetylmethionine is present on M1. The interval 1 to 142 (MEQPAGLQVD…PLPLPYQGKP (142 aa)) is head domain. 2 coiled-coil regions span residues 176-203 (WHLR…REEA) and 246-273 (RRLA…NCEL). Residue T282 is modified to Phosphothreonine. Disordered stretches follow at residues 282 to 415 (TLPA…SFRS) and 430 to 472 (SQSV…HLAS). Over residues 287 to 300 (AREDRALSSRERST) the composition is skewed to basic and acidic residues. A phosphoserine mark is found at S328, S330, S372, and S375. Residues 406-415 (RSSSVDSFRS) show a composition bias toward low complexity. Phosphoserine is present on residues S447 and S473.

Belongs to the CCDC61 family. As to quaternary structure, forms homodimers (via head domain). Interacts with CEP170. Interacts with PCM1 and CEP131. Binds tubulin.

The protein localises to the cytoplasm. It is found in the cytoskeleton. Its subcellular location is the microtubule organizing center. It localises to the centrosome. The protein resides in the centriolar satellite. The protein localises to the cilium basal body. In terms of biological role, microtubule-binding centrosomal protein required for centriole cohesion, independently of the centrosome-associated protein/CEP250 and rootletin/CROCC linker. In interphase, required for anchoring microtubule at the mother centriole subdistal appendages and for centrosome positioning. During mitosis, may be involved in spindle assembly and chromatin alignment by regulating the organization of spindle microtubules into a symmetrical structure. Plays a non-essential role in ciliogenesis. The chain is Centrosomal protein CCDC61 from Rattus norvegicus (Rat).